The primary structure comprises 331 residues: MGRGYNLLFVLVTFLVLVAAVTAQGNRGSNSGGGRRPHVGFYGNRCRNVESIVRSVVQSHVRSIPANAPGILRMHFHDCFVHGCDGSVLLAGNTSERTAVPNRSLRGFEVIEEAKARLEKACPRTVSCADILTLAARDAVVLTGGQRWEVPLGRLDGRISQASDVNLPGPSDSVAKQKQDFAAKTLNTLDLVTLVGGHTIGTAGCGLVRGRFVNFNGTGQPDPSIDPSFVPLILAQCPQNGGTRVELDEGSVDKFDTSFLRKVTSSRVVLQSDLVLWKDPETRAIIERLLGLRRPSLRFGTEFGKSMVKMSLIEVKTGSDGEIRRVCSAIN.

The signal sequence occupies residues 1-23 (MGRGYNLLFVLVTFLVLVAAVTA). Cystine bridges form between Cys-46–Cys-122, Cys-79–Cys-84, Cys-128–Cys-327, and Cys-205–Cys-237. His-77 serves as the catalytic Proton acceptor. Asp-78, Val-81, Gly-83, Asp-85, and Ser-87 together coordinate Ca(2+). Residue Asn-93 is glycosylated (N-linked (GlcNAc...) asparagine). Pro-168 serves as a coordination point for substrate. His-198 contacts heme b. Thr-199 provides a ligand contact to Ca(2+). An N-linked (GlcNAc...) asparagine glycan is attached at Asn-216. Residues Asp-248, Ser-251, and Asp-256 each coordinate Ca(2+).

This sequence belongs to the peroxidase family. Classical plant (class III) peroxidase subfamily. It depends on heme b as a cofactor. Ca(2+) serves as cofactor. Mainly expressed in roots and slightly in leaves.

The protein resides in the secreted. It carries out the reaction 2 a phenolic donor + H2O2 = 2 a phenolic radical donor + 2 H2O. Its function is as follows. Removal of H(2)O(2), oxidation of toxic reductants, biosynthesis and degradation of lignin, suberization, auxin catabolism, response to environmental stresses such as wounding, pathogen attack and oxidative stress. These functions might be dependent on each isozyme/isoform in each plant tissue. In Arabidopsis thaliana (Mouse-ear cress), this protein is Peroxidase 69 (PER69).